Reading from the N-terminus, the 580-residue chain is PX domain-containing protein kinase-like protein (580 aa).

A PX domain is found at 14–126 (LDDTVPLTAA…KFLDPNNYSA (113 aa)). Positions 88-481 (FIAERQKGLQ…VENSEEQPVK (394 aa)) constitute a Protein kinase domain. The segment at 433-551 (EQKQIHQHRR…LPQAVNGVNR (119 aa)) is disordered. Composition is skewed to basic residues over residues 437–448 (IHQHRRLTRAQS) and 457–469 (KRRKILARKKSKR). The span at 483–514 (SNANNSAGSGASSPLTSPSSPTPPSTAGLSSA) shows a compositional bias: low complexity. Over residues 515 to 531 (LPPPPPPPPPPPPPAGP) the composition is skewed to pro residues. The 20-residue stretch at 549 to 568 (VNRGALLSSIQNFQKGTLRK) folds into the WH2 domain.

The protein belongs to the protein kinase superfamily.

The protein resides in the cytoplasm. It is found in the cell membrane. In terms of biological role, binds to and modulates brain Na,K-ATPase subunits ATP1B1 and ATP1B3 and may thereby participate in the regulation of electrical excitability and synaptic transmission. May not display kinase activity. This chain is PX domain-containing protein kinase-like protein, found in Rattus norvegicus (Rat).